The primary structure comprises 329 residues: MKIYYDQDADLSLLADKTVAIIGYGSQGHAHAQNLRDSGVKVVIGQRPGGPNWELAKENGFTPMSAAEAAAAADLIMILVPDQHQKAVYEKDVLPHLKPGKMLLFAHGFNIHFQQIVPPADVDVAMVAPKGPGHLVRRVYTEGAGVPCLIAIHQNATGKAMETALAYAKGVGGTRGGVLTTTFKEETETDLFGEQAVLCGGAAELVKAGFETLCEAGYQPEIAYFECLHELKLIVDLMYEGGLSRMRYSISDTAEYGDYVSGPRVVTDETRAEMRQILKEIQDGTFARDFIMENMSGRAHFLSMRRINAEHPIEKVGAKLRGMMSWLKK.

Residues 1–181 enclose the KARI N-terminal Rossmann domain; it reads MKIYYDQDAD…GGTRGGVLTT (181 aa). NADP(+) is bound by residues 24 to 27, arginine 47, and 82 to 85; these read YGSQ and DQHQ. The active site involves histidine 107. Residue glycine 133 coordinates NADP(+). One can recognise a KARI C-terminal knotted domain in the interval 182-327; that stretch reads TFKEETETDL…AKLRGMMSWL (146 aa). Mg(2+)-binding residues include aspartate 190, glutamate 194, glutamate 226, and glutamate 230. Position 251 (serine 251) interacts with substrate.

Belongs to the ketol-acid reductoisomerase family. It depends on Mg(2+) as a cofactor.

The enzyme catalyses (2R)-2,3-dihydroxy-3-methylbutanoate + NADP(+) = (2S)-2-acetolactate + NADPH + H(+). It carries out the reaction (2R,3R)-2,3-dihydroxy-3-methylpentanoate + NADP(+) = (S)-2-ethyl-2-hydroxy-3-oxobutanoate + NADPH + H(+). The protein operates within amino-acid biosynthesis; L-isoleucine biosynthesis; L-isoleucine from 2-oxobutanoate: step 2/4. Its pathway is amino-acid biosynthesis; L-valine biosynthesis; L-valine from pyruvate: step 2/4. Functionally, involved in the biosynthesis of branched-chain amino acids (BCAA). Catalyzes an alkyl-migration followed by a ketol-acid reduction of (S)-2-acetolactate (S2AL) to yield (R)-2,3-dihydroxy-isovalerate. In the isomerase reaction, S2AL is rearranged via a Mg-dependent methyl migration to produce 3-hydroxy-3-methyl-2-ketobutyrate (HMKB). In the reductase reaction, this 2-ketoacid undergoes a metal-dependent reduction by NADPH to yield (R)-2,3-dihydroxy-isovalerate. The protein is Ketol-acid reductoisomerase (NADP(+)) of Solidesulfovibrio magneticus (strain ATCC 700980 / DSM 13731 / RS-1) (Desulfovibrio magneticus).